Here is a 436-residue protein sequence, read N- to C-terminus: GTPase Der (436 aa).

EngA-type G domains are found at residues 4-167 (PIVA…NKES) and 176-351 (IRLS…ENHK). Residues 10 to 17 (GKPNVGKS), 57 to 61 (DTGGI), 119 to 122 (NKVD), 182 to 189 (GRPNVGKS), 229 to 233 (DTAGM), and 294 to 297 (NKWD) contribute to the GTP site. The KH-like domain maps to 352–436 (KRVQSSTLNE…PIHIIPRKRN (85 aa)).

Belongs to the TRAFAC class TrmE-Era-EngA-EngB-Septin-like GTPase superfamily. EngA (Der) GTPase family. As to quaternary structure, associates with the 50S ribosomal subunit.

Functionally, GTPase that plays an essential role in the late steps of ribosome biogenesis. The sequence is that of GTPase Der from Staphylococcus epidermidis (strain ATCC 35984 / DSM 28319 / BCRC 17069 / CCUG 31568 / BM 3577 / RP62A).